We begin with the raw amino-acid sequence, 140 residues long: Nucleoside diphosphate kinase (140 aa).

ATP contacts are provided by Lys11, Phe59, Arg87, Thr93, Arg104, and Asn114. The active-site Pros-phosphohistidine intermediate is the His117.

The protein belongs to the NDK family. As to quaternary structure, homotetramer. Mg(2+) serves as cofactor.

The protein resides in the cytoplasm. The enzyme catalyses a 2'-deoxyribonucleoside 5'-diphosphate + ATP = a 2'-deoxyribonucleoside 5'-triphosphate + ADP. It carries out the reaction a ribonucleoside 5'-diphosphate + ATP = a ribonucleoside 5'-triphosphate + ADP. Its function is as follows. Major role in the synthesis of nucleoside triphosphates other than ATP. The ATP gamma phosphate is transferred to the NDP beta phosphate via a ping-pong mechanism, using a phosphorylated active-site intermediate. In Rhodopseudomonas palustris (strain ATCC BAA-98 / CGA009), this protein is Nucleoside diphosphate kinase.